A 292-amino-acid polypeptide reads, in one-letter code: MIRIGTRGSKLALYQANKVAELLKNLGYKVEIKIIKTTGDRVLDKKLSDIGIGVFTKELDLAMLNNEIDIAVHSLKDIPTIWNENLMVGAVLERDSYHDLLIWNKDIDFNEDSKIVIGTSSMRRRAFLKFIYPNAKFELLRGNVDTRLRKLKEGLYDAIVLSEAGIIRLGVSLEDFNYKRLDILPAPAQGIIAVACKRDDEEMKSILKEINHERTYLESLCERTALNEFGGGCSVPFGALAVYDEKNELLKLKAAVVTNDELKNASGEVKCKIDEIDKAVELGKKIGLKLKN.

The residue at position 233 (Cys233) is an S-(dipyrrolylmethanemethyl)cysteine.

It belongs to the HMBS family. Requires dipyrromethane as cofactor.

The enzyme catalyses 4 porphobilinogen + H2O = hydroxymethylbilane + 4 NH4(+). Its pathway is porphyrin-containing compound metabolism; protoporphyrin-IX biosynthesis; coproporphyrinogen-III from 5-aminolevulinate: step 2/4. Its function is as follows. Tetrapolymerization of the monopyrrole PBG into the hydroxymethylbilane pre-uroporphyrinogen in several discrete steps. The chain is Probable porphobilinogen deaminase (hemC) from Methanocaldococcus jannaschii (strain ATCC 43067 / DSM 2661 / JAL-1 / JCM 10045 / NBRC 100440) (Methanococcus jannaschii).